The primary structure comprises 127 residues: Turripeptide OL172 (127 aa).

The first 20 residues, 1–20, serve as a signal peptide directing secretion; that stretch reads MFSTLIFLTAVTLLMMPSQT. Positions 42-43 are excised as a propeptide; that stretch reads QR. Position 44 is a pyrrolidone carboxylic acid (glutamine 44). Residues 73-75 constitute a propeptide that is removed on maturation; the sequence is QRK. The residue at position 76 (glutamine 76) is a Pyrrolidone carboxylic acid. Positions 104–106 are excised as a propeptide; the sequence is QRK. The residue at position 107 (glutamine 107) is a Pyrrolidone carboxylic acid.

Post-translationally, the turripeptide OL172 conotoxin-like contains 2 disulfide bonds. In terms of tissue distribution, expressed by the venom duct.

It localises to the secreted. In terms of biological role, acts as a neurotoxin by inhibiting an ion channel. The protein is Turripeptide OL172 of Iotyrris olangoensis (Sea snail).